The sequence spans 234 residues: Phosphatidylinositol phosphate synthase (234 aa).

The next 2 membrane-spanning stretches (helical) occupy residues 28–48 (LTPD…ALVL) and 54–70 (LFPG…FDML). 31 to 34 (DAVT) lines the a CDP-1,2-diacyl-sn-glycerol pocket. Residues Asp68 and Asp71 each coordinate Mg(2+). Positions 72, 76, and 82 each coordinate a CDP-1,2-diacyl-sn-glycerol. The Mg(2+) site is built by Asp89 and Asp93. A run of 4 helical transmembrane segments spans residues 91–110 (ACDR…WVAF), 116–134 (LLVV…ISYI), 155–173 (RLII…FIAW), and 179–197 (VAMW…QRLY). The active-site Proton acceptor is the Asp93. The disordered stretch occupies residues 211 to 234 (PSAPVRDDDAQGHPRSGDPGKTQR). The span at 215–228 (VRDDDAQGHPRSGD) shows a compositional bias: basic and acidic residues.

The protein belongs to the CDP-alcohol phosphatidyltransferase class-I family. Homodimer. The cofactor is Mg(2+).

Its subcellular location is the cell membrane. The enzyme catalyses a CDP-1,2-diacyl-sn-glycerol + 1D-myo-inositol 3-phosphate = a 1,2-diacyl-sn-glycero-3-phospho-(1D-myo-inositol-3-phosphate) + CMP + H(+). It carries out the reaction 1,2-di-(9Z-octadecenoyl)-sn-glycero-3-cytidine-5'-diphosphate + 1D-myo-inositol 3-phosphate = 1,2-di-(9Z-octadecenoyl)-sn-glycero-3-phospho-(1D-myo-inositol-3-phosphate) + CMP + H(+). Its pathway is phospholipid metabolism; phosphatidylinositol phosphate biosynthesis. Catalyzes the conjugation of the 1'-hydroxyl group of D-myo-inositol-3-phosphate (also named L-myo-inositol-1-phosphate) with a lipid tail of cytidine diphosphate diacylglycerol (CDP-DAG), forming phosphatidylinositol phosphate (PIP) and CMP. PIP is a precursor of phosphatidylinositol (PI) which is an essential lipid for mycobacteria required for formation of their cell wall. The sequence is that of Phosphatidylinositol phosphate synthase from Mycobacterium marinum (strain ATCC BAA-535 / M).